Reading from the N-terminus, the 118-residue chain is Large ribosomal subunit protein bL20 (118 aa).

Belongs to the bacterial ribosomal protein bL20 family.

Binds directly to 23S ribosomal RNA and is necessary for the in vitro assembly process of the 50S ribosomal subunit. It is not involved in the protein synthesizing functions of that subunit. This chain is Large ribosomal subunit protein bL20, found in Proteus mirabilis (strain HI4320).